A 1021-amino-acid polypeptide reads, in one-letter code: Receptor-like protein EIX2 (1021 aa).

Positions 1–24 (MGKRTNPRHFLVTWSLLLLETAFG) are cleaved as a signal peptide. An N-cap region spans residues 25–109 (LTSREVNKTL…PILTGKVSPS (85 aa)). At 25–963 (LTSREVNKTL…DDDDEFSSLE (939 aa)) the chain is on the extracellular side. A glycan (N-linked (GlcNAc...) asparagine) is linked at asparagine 31. 6 LRR repeats span residues 113-136 (LEYL…RFIG), 138-161 (LKRL…QFQN), 162-184 (LTSL…VWLS), 186-211 (LSSL…ITKV), 214-237 (LKEL…VANS), and 239-262 (LISL…SWLF). N-linked (GlcNAc...) asparagine glycosylation is found at asparagine 145 and asparagine 161. N-linked (GlcNAc...) asparagine glycosylation occurs at asparagine 236. N-linked (GlcNAc...) asparagine glycosylation is present at asparagine 263. LRR repeat units lie at residues 265 to 288 (STSL…RFGS), 290 to 313 (MYLE…SFGN), 314 to 337 (LTRL…LFLR), 342 to 365 (RKSL…VTRF), 366 to 388 (SSLK…RVGQ), 389 to 412 (VSSL…LALF), 413 to 436 (PSLR…IGKL), 437 to 459 (SQLR…MGQL), 461 to 483 (NLER…HFSN), 484 to 507 (LSSL…DWVP), 509 to 532 (FQLQ…LQTQ), 533 to 555 (NNYT…WFSN), 557 to 581 (PPEL…IVSK), and 583 to 607 (DYMI…NIQI). Residue asparagine 313 is glycosylated (N-linked (GlcNAc...) asparagine). Residue asparagine 483 is glycosylated (N-linked (GlcNAc...) asparagine). Residues asparagine 534, asparagine 544, asparagine 564, and asparagine 593 are each glycosylated (N-linked (GlcNAc...) asparagine). The stretch at 608 to 626 (FYLHKNHFSGSISSICRNT) is one LRR 21; degenerate repeat. 6 LRR repeats span residues 627–651 (IGAA…WMNM), 652–675 (SNLA…LGSL), 677–698 (NLEA…FSQC), 699–722 (QLLQ…IGTD), 723–747 (LLQL…ICQL), and 749–773 (FLQI…NFTI). Residues asparagine 650 and asparagine 663 are each glycosylated (N-linked (GlcNAc...) asparagine). N-linked (GlcNAc...) asparagine glycans are attached at residues asparagine 770 and asparagine 778. 4 LRR repeats span residues 818-842 (LLYL…IAEM), 843-866 (RGLR…IGQM), 867-890 (KLLE…LSNL), and 892-913 (FLSV…STQL). N-linked (GlcNAc...) asparagine glycosylation is found at asparagine 849, asparagine 856, and asparagine 889. A C-cap/acidic domain region spans residues 914–963 (QSFDRSSYSGNAQLCGPPLEECPGYAPPIDRGSNTNPQEHDDDDEFSSLE). The chain crosses the membrane as a helical span at residues 964–984 (FYVSMVLGFFVTFWGILGCLI). Topologically, residues 985-1021 (VNRSWRNAYFTFLTDMKSWLHMTSRVCFARLKGKLRN) are cytoplasmic.

This sequence belongs to the RLP family. As to quaternary structure, interacts with EIX elicitor protein.

It localises to the cell membrane. In terms of biological role, involved in plant defense. Confers resistance to the fungal pathogen T.viride through recognition of the EIX elicitor protein. The protein is Receptor-like protein EIX2 of Solanum lycopersicum (Tomato).